We begin with the raw amino-acid sequence, 150 residues long: Endoribonuclease YbeY (150 aa).

Zn(2+) contacts are provided by His102, His106, and His112.

It belongs to the endoribonuclease YbeY family. Zn(2+) is required as a cofactor.

The protein resides in the cytoplasm. Its function is as follows. Single strand-specific metallo-endoribonuclease involved in late-stage 70S ribosome quality control and in maturation of the 3' terminus of the 16S rRNA. This Thermotoga maritima (strain ATCC 43589 / DSM 3109 / JCM 10099 / NBRC 100826 / MSB8) protein is Endoribonuclease YbeY.